Here is a 115-residue protein sequence, read N- to C-terminus: MSAQGHRLTAPVNSEKVYIVLGLSFALISITFLLSRNNLPHVGDNIHSLPHGDAYRDGTKAILYNSPNFGSRTSLNNSKNAAFAAVLLLSLLIYGSRCLSQRNHLCACGNNHSSN.

At 1-13 (MSAQGHRLTAPVN) the chain is on the cytoplasmic side. The chain crosses the membrane as a helical span at residues 14 to 34 (SEKVYIVLGLSFALISITFLL). The Lumenal segment spans residues 35–74 (SRNNLPHVGDNIHSLPHGDAYRDGTKAILYNSPNFGSRTS). A helical transmembrane segment spans residues 75-95 (LNNSKNAAFAAVLLLSLLIYG). Over 96–115 (SRCLSQRNHLCACGNNHSSN) the chain is Cytoplasmic.

The protein belongs to the Tymovirales TGBp2 protein family.

Its subcellular location is the host endoplasmic reticulum membrane. Functionally, plays a role in viral cell-to-cell propagation, by facilitating genome transport to neighboring plant cells through plasmosdesmata,. The sequence is that of Movement protein TGB2 from Potato virus X (strain HB) (PVX).